The sequence spans 255 residues: 14-3-3 protein 5 (255 aa).

It belongs to the 14-3-3 family. As to quaternary structure, homodimer.

This is 14-3-3 protein 5 (TFT5) from Solanum lycopersicum (Tomato).